Consider the following 486-residue polypeptide: Cardiolipin synthase A (486 aa).

The next 2 helical transmembrane spans lie at 3 to 23 (TVYT…IAGV) and 38 to 58 (MAWL…YLAV). PLD phosphodiesterase domains follow at residues 219-246 (MDLR…VDPR) and 399-426 (EGGL…DMRS). Residues His-224, Lys-226, Asp-231, His-404, Lys-406, and Asp-411 contribute to the active site.

This sequence belongs to the phospholipase D family. Cardiolipin synthase subfamily. ClsA sub-subfamily.

The protein resides in the cell inner membrane. It carries out the reaction 2 a 1,2-diacyl-sn-glycero-3-phospho-(1'-sn-glycerol) = a cardiolipin + glycerol. In terms of biological role, catalyzes the reversible phosphatidyl group transfer from one phosphatidylglycerol molecule to another to form cardiolipin (CL) (diphosphatidylglycerol) and glycerol. The protein is Cardiolipin synthase A of Escherichia coli O7:K1 (strain IAI39 / ExPEC).